The following is a 214-amino-acid chain: DELTA-actitoxin-Aeq1b (214 aa).

Positions 1 to 19 (MSRLIIVFIVVTMICAATA) are cleaved as a signal peptide. The propeptide occupies 20–35 (LSSKKSINEDEKDEKR). The tract at residues 38–47 (AVAGAVIEGA) is plays an important role in the hemolytic activity. An N-terminal region region spans residues 46 to 65 (GATLTFNVLQTVLKALGDIS). Residues S89, V122, S140, P142, Y168, Y172, and Y173 each coordinate phosphocholine. The trp-rich region, which is important for the binding to lipid membrane stretch occupies residues 140-155 (SIPFDYNLYSNWWNVK). The Cell attachment site, crucial for protein stability motif lies at 179–181 (RGD).

The protein belongs to the actinoporin family. Sea anemone subfamily. As to quaternary structure, octamer or nonamer in membranes. Monomer in the soluble state.

It localises to the secreted. The protein localises to the nematocyst. Its subcellular location is the target cell membrane. In terms of biological role, pore-forming protein that forms cations-selective hydrophilic pores of around 1 nm and causes cytolysis. Pore formation is a multi-step process that involves specific recognition of membrane sphingomyelin (but neither cholesterol nor phosphatidylcholine) using aromatic rich region and adjacent phosphocholine (POC) binding site, firm binding to the membrane (mainly driven by hydrophobic interactions) accompanied by the transfer of the N-terminal region to the lipid-water interface and finally pore formation after oligomerization of monomers. This is DELTA-actitoxin-Aeq1b from Actinia equina (Beadlet anemone).